The chain runs to 1190 residues: Pumilio homolog 1 (1190 aa).

4 disordered regions span residues 38-74, 491-531, 611-675, and 744-777; these read LTSG…GVAG, SNSA…QQTD, ANGP…NSSL, and GPVG…LNLG. Composition is skewed to low complexity over residues 491–508, 518–531, 628–675, and 765–777; these read SNSA…GQQQ, PLTP…QQTD, QQPQ…NSSL, and LSSH…LNLG. One can recognise a PUM-HD domain in the interval 830–1172; the sequence is GRSRLLEDFR…HILAKLEKYY (343 aa). 8 Pumilio repeats span residues 850-885, 886-921, 922-959, 960-995, 996-1031, 1032-1067, 1068-1103, and 1107-1146; these read EIAG…LVFN, EILQ…ALAE, RIRG…EMVR, ELDG…FIID, AFKS…PILE, ELHQ…KIVA, EIRG…MLID, and TMND…IVMH. An adenine-nucleotide binding in RNA target region spans residues 865–869; that stretch reads SRFIQ. The tract at residues 901–905 is uracil-nucleotide binding in RNA target; it reads NYVIQ. An adenine-nucleotide binding in RNA target region spans residues 937–941; the sequence is CRVIQ. Residues 975 to 979 form a non-specific-nucleotide binding in RNA target region; the sequence is NHVVQ. An adenine-nucleotide binding in RNA target region spans residues 1011–1015; sequence CRVIQ. The uracil-nucleotide binding in RNA target stretch occupies residues 1047–1051; the sequence is NYVIQ. The interval 1083–1087 is guanine-nucleotide binding in RNA target; sequence SNVVE. The uracil-nucleotide binding in RNA target stretch occupies residues 1126–1130; that stretch reads NYVVQ.

As to quaternary structure, interacts with cpeb1-a; interacts with unphosphorylated cpeb1-a but not phosphorylated. Component of a complex with papd4, sympk, tacc3, parn, dazl and cpeb1. Phosphorylated. Phosphorylation takes place at the time of dissociation of cpeb1-a from pum1 and the translational activation of ccnb1 mRNA. Present in oocytes (at protein level).

It is found in the cytoplasm. It localises to the P-body. Its subcellular location is the cytoplasmic granule. Sequence-specific RNA-binding protein that acts as a post-transcriptional repressor by binding the 3'-UTR of mRNA targets. Binds to an RNA consensus sequence, the Pumilio Response Element (PRE), 5'-UGUANAUA-3', that is related to the Nanos Response Element (NRE). Mediates post-transcriptional repression of transcripts via different mechanisms: acts via direct recruitment of deadenylase complexes leading to translational inhibition and mRNA degradation. Also mediates deadenylation-independent repression by promoting accessibility of miRNAs. Acts as a post-transcriptional repressor of ccnb1 mRNA during oocyte maturation. The chain is Pumilio homolog 1 from Xenopus laevis (African clawed frog).